The sequence spans 145 residues: D-aminoacyl-tRNA deacylase (145 aa).

Positions 137 to 138 (GP) match the Gly-cisPro motif, important for rejection of L-amino acids motif.

It belongs to the DTD family. Homodimer.

The protein resides in the cytoplasm. The catalysed reaction is glycyl-tRNA(Ala) + H2O = tRNA(Ala) + glycine + H(+). It carries out the reaction a D-aminoacyl-tRNA + H2O = a tRNA + a D-alpha-amino acid + H(+). An aminoacyl-tRNA editing enzyme that deacylates mischarged D-aminoacyl-tRNAs. Also deacylates mischarged glycyl-tRNA(Ala), protecting cells against glycine mischarging by AlaRS. Acts via tRNA-based rather than protein-based catalysis; rejects L-amino acids rather than detecting D-amino acids in the active site. By recycling D-aminoacyl-tRNA to D-amino acids and free tRNA molecules, this enzyme counteracts the toxicity associated with the formation of D-aminoacyl-tRNA entities in vivo and helps enforce protein L-homochirality. The polypeptide is D-aminoacyl-tRNA deacylase (Salmonella arizonae (strain ATCC BAA-731 / CDC346-86 / RSK2980)).